A 386-amino-acid polypeptide reads, in one-letter code: DNA dC-&gt;dU-editing enzyme APOBEC-3D (386 aa).

CMP/dCMP-type deaminase domains lie at 29–145 (GRSY…DWRW) and 187–334 (DDNY…LCSL). Zn(2+) contacts are provided by histidine 78, cysteine 109, cysteine 112, and histidine 262. Glutamate 264 acts as the Proton donor in catalysis. Zn(2+) contacts are provided by cysteine 293 and cysteine 296.

Belongs to the cytidine and deoxycytidylate deaminase family. In terms of assembly, can form homo- and heterodimers with APOBEC3F and APOBEC3G. Interacts with L1RE1; this interaction inhibits LINE-1 retrotransposition. (Microbial infection) Interacts with HIV-1 Vif. This interaction triggers APOBEC3D polyubiquitylation and degradation by the 26S proteasome. Zn(2+) is required as a cofactor. As to expression, expressed in lymphoid organs. Also detected in non-lymphoid tissues including lung.

The protein localises to the cytoplasm. It localises to the P-body. It catalyses the reaction a 2'-deoxycytidine in single-stranded DNA + H2O + H(+) = a 2'-deoxyuridine in single-stranded DNA + NH4(+). (Microbial infection) Antiviral activity is neutralized by the HIV-1 virion infectivity factor (Vif), that prevents its incorporation into progeny virions by both inhibiting its translation and/or by inducing its ubiquitination and subsequent degradation by the 26S proteasome. DNA deaminase (cytidine deaminase) which acts as an inhibitor of retrovirus replication and retrotransposon mobility via deaminase-dependent and -independent mechanisms. Exhibits antiviral activity against HIV-1. After the penetration of retroviral nucleocapsids into target cells of infection and the initiation of reverse transcription, it can induce the conversion of cytosine to uracil in the minus-sense single-strand viral DNA, leading to G-to-A hypermutations in the subsequent plus-strand viral DNA. The resultant detrimental levels of mutations in the proviral genome, along with a deamination-independent mechanism that works prior to the proviral integration, together exert efficient antiretroviral effects in infected target cells. Selectively targets single-stranded DNA and does not deaminate double-stranded DNA or single- or double-stranded RNA. Also inhibits the mobility of LTR and non-LTR retrotransposons. Its function is as follows. (Microbial infection) Enhances hepatitis B virus/HBV replication by excluding restriction factors APOBEC3F and APOBEC3G from HBV capsids. The protein is DNA dC-&gt;dU-editing enzyme APOBEC-3D of Homo sapiens (Human).